Reading from the N-terminus, the 592-residue chain is LIM domain-binding protein 1 (592 aa).

2 disordered regions span residues 14–41 (GHPPPFAGPESSNSHYGMPPSQGTNSQN) and 305–368 (PAPE…NPMT). Over residues 23-41 (ESSNSHYGMPPSQGTNSQN) the composition is skewed to polar residues. Positions 322 to 344 (PAANPRGSKKATAAAAAAAAAAT) are enriched in low complexity. Over residues 352–368 (PTASPANNQQFPPNPMT) the composition is skewed to polar residues. Residues 378–417 (DVMVVGEPSMMGSEFGENDERTISRVENSQYDPNAMQMQS) enclose the LIM interaction domain (LID) domain. 2 disordered regions span residues 437–458 (HHPGMQPPPGQQHMPPHSMGSQ) and 559–592 (GGMQMNQMPPPNYSQYTGGPPPQWPPPNSAMITG). Over residues 577–586 (GPPPQWPPPN) the composition is skewed to pro residues.

Belongs to the LDB family. Interacts with blmp-1. Expressed in all neurons and some other tissues of the adult, including vulval muscle, and, in males, all the neurons of the tail region. Expressed in vulval cells.

Functionally, binds to the LIM domain of LIM domain-containing transcription factors. Required for the blmp-1-mediated transcriptional activation or repression of several hypodermal genes, such as bed-3. Regulates sam-10 nuclear localization in PLM neurons. Has a role in synaptic differentiation of PLM mechanosensory neurons. Involved in gonadogenesis. This chain is LIM domain-binding protein 1, found in Caenorhabditis elegans.